We begin with the raw amino-acid sequence, 276 residues long: NH(3)-dependent NAD(+) synthetase (276 aa).

47-54 (GISGGQDS) contacts ATP. D53 provides a ligand contact to Mg(2+). R141 is a binding site for deamido-NAD(+). T161 provides a ligand contact to ATP. A Mg(2+)-binding site is contributed by E166. Residues K174 and D181 each coordinate deamido-NAD(+). The ATP site is built by K190 and T212. 261-262 (HK) is a deamido-NAD(+) binding site.

It belongs to the NAD synthetase family. Homodimer.

The enzyme catalyses deamido-NAD(+) + NH4(+) + ATP = AMP + diphosphate + NAD(+) + H(+). Its pathway is cofactor biosynthesis; NAD(+) biosynthesis; NAD(+) from deamido-NAD(+) (ammonia route): step 1/1. In terms of biological role, catalyzes the ATP-dependent amidation of deamido-NAD to form NAD. Uses ammonia as a nitrogen source. This chain is NH(3)-dependent NAD(+) synthetase, found in Levilactobacillus brevis (strain ATCC 367 / BCRC 12310 / CIP 105137 / JCM 1170 / LMG 11437 / NCIMB 947 / NCTC 947) (Lactobacillus brevis).